The primary structure comprises 623 residues: Putative pentatricopeptide repeat-containing protein At3g11460, mitochondrial (623 aa).

Residues 1 to 35 constitute a mitochondrion transit peptide; sequence MIVVTSFVRNSAVAAVASTPWNVRLRELAYQSLFS. 12 PPR repeats span residues 17 to 51, 52 to 86, 87 to 117, 120 to 154, 155 to 189, 190 to 220, 221 to 255, 256 to 290, 291 to 321, 322 to 356, 357 to 387, and 393 to 423; these read ASTP…GSSP, DAFS…GCET, EPFV…NPQS, LSVC…GVSV, DSVT…GLDS, EVAV…MPVK, GLIT…GVCP, DPFT…GFVP, NVFV…MPVK, SLVS…GIRP, DGAV…MKRE, and GPEH…MPVE. The tract at residues 428–503 is type E motif; the sequence is VWGALLGACK…KPGYSYVEHK (76 aa). The interval 504 to 535 is type E(+) motif; it reads GRVHLFLAGDRSHEQTEEVHRMLDELETSVME. The interval 536–623 is type DYW motif; it reads LAGNMDCDRG…DGVCSCKDYW (88 aa).

The protein belongs to the PPR family. PCMP-H subfamily. Interacts with MORF8/RIP1.

It is found in the mitochondrion. Involved in C-to-U editing of mitochondrial RNA. Required specifically for editing the mitochondrial NAD2 transcript. In Arabidopsis thaliana (Mouse-ear cress), this protein is Putative pentatricopeptide repeat-containing protein At3g11460, mitochondrial (PCMP-H52).